The sequence spans 194 residues: Methylated-DNA--protein-cysteine methyltransferase (194 aa).

Residues Y125 and R139 each coordinate DNA. C156 serves as the catalytic Nucleophile; methyl group acceptor. S162 contributes to the DNA binding site.

It belongs to the MGMT family.

Its subcellular location is the nucleus. It carries out the reaction a 6-O-methyl-2'-deoxyguanosine in DNA + L-cysteinyl-[protein] = S-methyl-L-cysteinyl-[protein] + a 2'-deoxyguanosine in DNA. The enzyme catalyses a 4-O-methyl-thymidine in DNA + L-cysteinyl-[protein] = a thymidine in DNA + S-methyl-L-cysteinyl-[protein]. Functionally, involved in the cellular defense against the biological effects of O6-methylguanine (O6-MeG) and O4-methylthymine (O4-MeT) in DNA. Repairs the methylated nucleobase in DNA by stoichiometrically transferring the methyl group to a cysteine residue in the enzyme. This is a suicide reaction: the enzyme is irreversibly inactivated. This is Methylated-DNA--protein-cysteine methyltransferase (MGT1) from Scheffersomyces stipitis (strain ATCC 58785 / CBS 6054 / NBRC 10063 / NRRL Y-11545) (Yeast).